A 167-amino-acid polypeptide reads, in one-letter code: Single-stranded DNA-binding protein 2 (167 aa).

The 104-residue stretch at 1 to 104 folds into the SSB domain; it reads MLNRVVLVGR…VVCDSVQFLE (104 aa). The interval 107 to 167 is disordered; the sequence is NAQQNGGQRQ…IDISDDDLPF (61 aa). 2 stretches are compositionally biased toward low complexity: residues 109 to 118 and 132 to 147; these read QQNGGQRQQN and SGQNNSYNNSSNTKQS. An Important for interaction with partner proteins motif is present at residues 162-167; sequence DDDLPF.

As to quaternary structure, homotetramer.

Functionally, plays an important role in DNA replication, recombination and repair. Binds to ssDNA and to an array of partner proteins to recruit them to their sites of action during DNA metabolism. This Staphylococcus aureus (strain MSSA476) protein is Single-stranded DNA-binding protein 2 (ssb2).